The primary structure comprises 399 residues: Acetate kinase (399 aa).

N9 serves as a coordination point for Mg(2+). K16 is a binding site for ATP. Residue R90 participates in substrate binding. D147 functions as the Proton donor/acceptor in the catalytic mechanism. ATP contacts are provided by residues 207–211 (HLGNG), 281–283 (DFR), and 333–337 (GVGEN). Mg(2+) is bound at residue E387.

The protein belongs to the acetokinase family. In terms of assembly, homodimer. The cofactor is Mg(2+). Requires Mn(2+) as cofactor.

The protein resides in the cytoplasm. The enzyme catalyses acetate + ATP = acetyl phosphate + ADP. The protein operates within metabolic intermediate biosynthesis; acetyl-CoA biosynthesis; acetyl-CoA from acetate: step 1/2. Catalyzes the formation of acetyl phosphate from acetate and ATP. Can also catalyze the reverse reaction. The chain is Acetate kinase from Mycobacterium sp. (strain KMS).